The following is a 295-amino-acid chain: Aspartate carbamoyltransferase catalytic subunit (295 aa).

Carbamoyl phosphate is bound by residues arginine 54 and threonine 55. Position 82 (lysine 82) interacts with L-aspartate. Positions 104, 132, and 135 each coordinate carbamoyl phosphate. L-aspartate is bound by residues arginine 165 and arginine 218. Carbamoyl phosphate is bound by residues glycine 257 and proline 258.

The protein belongs to the aspartate/ornithine carbamoyltransferase superfamily. ATCase family. In terms of assembly, heterododecamer (2C3:3R2) of six catalytic PyrB chains organized as two trimers (C3), and six regulatory PyrI chains organized as three dimers (R2).

It carries out the reaction carbamoyl phosphate + L-aspartate = N-carbamoyl-L-aspartate + phosphate + H(+). Its pathway is pyrimidine metabolism; UMP biosynthesis via de novo pathway; (S)-dihydroorotate from bicarbonate: step 2/3. Functionally, catalyzes the condensation of carbamoyl phosphate and aspartate to form carbamoyl aspartate and inorganic phosphate, the committed step in the de novo pyrimidine nucleotide biosynthesis pathway. This is Aspartate carbamoyltransferase catalytic subunit from Wolbachia pipientis wMel.